Here is a 497-residue protein sequence, read N- to C-terminus: 4,4'-diaponeurosporene oxygenase (497 aa).

Residue 7-19 (VIGGGLGGISAAI) coordinates FAD.

The protein belongs to the carotenoid/retinoid oxidoreductase family. CrtP subfamily. FAD serves as cofactor.

It catalyses the reaction all-trans-4,4'-diaponeurosporene + 2 AH2 + 2 O2 = 4,4'-diaponeurosporenal + 2 A + 3 H2O. The protein operates within carotenoid biosynthesis; staphyloxanthin biosynthesis; staphyloxanthin from farnesyl diphosphate: step 3/5. Involved in the biosynthesis of the yellow-orange carotenoid staphyloxanthin, which plays a role in the virulence via its protective function against oxidative stress. Catalyzes the oxidation of the terminal methyl side group of 4,4'-diaponeurosporene to form 4,4'-diaponeurosporen-4-al. In Staphylococcus aureus (strain MRSA252), this protein is 4,4'-diaponeurosporene oxygenase.